Here is a 316-residue protein sequence, read N- to C-terminus: Olfactory receptor 4N4 (316 aa).

Residues 1–25 (MKIANNTVVTEFILLGLTQSQDIQL) lie on the Extracellular side of the membrane. The N-linked (GlcNAc...) asparagine glycan is linked to Asn-5. Residues 26–49 (LVFVLILIFYLIILPGNFLIIFTI) traverse the membrane as a helical segment. The Cytoplasmic segment spans residues 50–57 (RSDPGLTA). The helical transmembrane segment at 58–79 (PLYLFLGNLAFLDASYSFIVAP) threads the bilayer. The Extracellular segment spans residues 80–100 (RMLVDFLSEKKVISYRGCITQ). Residues Cys-97 and Cys-189 are joined by a disulfide bond. Residues 101-120 (LFFLHFLGGGEGLLLVVMAF) form a helical membrane-spanning segment. The Cytoplasmic portion of the chain corresponds to 121-139 (DRYIAICRPLHCSTVMNPR). A helical transmembrane segment spans residues 140–158 (ACYAMMLALWLGGFVHSII). The Extracellular segment spans residues 159 to 195 (QVVLILRLPFCGPNQLDNFFCDVRQVIKLACTDMFVV). The chain crosses the membrane as a helical span at residues 196 to 219 (ELLMVFNSGLMTLLCFLGLLASYA). Topologically, residues 220 to 235 (VILCHVRRAASEGKNK) are cytoplasmic. A helical transmembrane segment spans residues 236 to 258 (AMSTCTTRVIIILLMFGPAIFIY). Over 259 to 269 (MCPFRALPADK) the chain is Extracellular. The chain crosses the membrane as a helical span at residues 270-289 (MVSLFHTVIFPLMNPMIYTL). Over 290-316 (RNQEVKTSMKRLLSRHVVCQVDFIIRN) the chain is Cytoplasmic.

This sequence belongs to the G-protein coupled receptor 1 family.

It localises to the cell membrane. In terms of biological role, odorant receptor. The sequence is that of Olfactory receptor 4N4 (OR4N4) from Homo sapiens (Human).